A 73-amino-acid chain; its full sequence is RNA-binding protein Hfq (73 aa).

The Sm domain maps to 8–68 (DQFLNQIRKD…ISTFAPQKNV (61 aa)).

Belongs to the Hfq family. As to quaternary structure, homohexamer.

Functionally, RNA chaperone that binds small regulatory RNA (sRNAs) and mRNAs to facilitate mRNA translational regulation in response to envelope stress, environmental stress and changes in metabolite concentrations. Also binds with high specificity to tRNAs. This chain is RNA-binding protein Hfq, found in Bacillus velezensis (strain DSM 23117 / BGSC 10A6 / LMG 26770 / FZB42) (Bacillus amyloliquefaciens subsp. plantarum).